Here is a 306-residue protein sequence, read N- to C-terminus: MADKLSVAIVGSGNISTDLLYKLLRSEWLEPRWMIGIDPESEGLARARKLGLETSHEGVDWLLARDEKPDMVFEATSAYVHRDAAPRYAEAGIRAIDLTPAAIGPGVIPPANLREHLDAPNVNMVTCGGQATIPMVHAVSRVVDVPYAEIVASVSSASAGPGTRANIDEFTKTTSAGVEVIGGARRGKAIIILNPADPPMIMRDTIFCAIPEDADHAAITQSVKDVVAEVQTYVPGYRLLNEPQFDEPSVVNGGNHLVTIFVEVEGAGDYLPPYAGNLDIMTAAAAKVGEEIARERVATSTTGAQA.

12 to 15 (SGNI) is a binding site for NAD(+). C127 (acyl-thioester intermediate) is an active-site residue. NAD(+) is bound by residues 158-166 (SAGPGTRAN) and N277.

This sequence belongs to the acetaldehyde dehydrogenase family.

It catalyses the reaction acetaldehyde + NAD(+) + CoA = acetyl-CoA + NADH + H(+). The sequence is that of Acetaldehyde dehydrogenase from Mycolicibacterium gilvum (strain PYR-GCK) (Mycobacterium gilvum (strain PYR-GCK)).